Here is a 433-residue protein sequence, read N- to C-terminus: Delta-aminolevulinic acid dehydratase, chloroplastic (433 aa).

The transit peptide at 1–56 (MASTFNIPCNAGTIKNFNNSQRNLGFSSNLGINFAKTRFSNCGDSGRIPSQLVVRA) directs the protein to the chloroplast. The tract at residues 83–115 (NAPSAPPVPPTPKAPSGTPSVSPLSLGRRPRRN) is disordered. Pro residues predominate over residues 86-95 (SAPPVPPTPK). The active-site Schiff-base intermediate with substrate is the lysine 301. Arginine 311 and lysine 323 together coordinate 5-aminolevulinate. Residue glutamate 339 participates in Mg(2+) binding. The active-site Schiff-base intermediate with substrate is the lysine 354. 5-aminolevulinate is bound by residues serine 380 and tyrosine 419.

Belongs to the ALAD family. As to quaternary structure, homooctamer. It depends on Mg(2+) as a cofactor.

It is found in the plastid. Its subcellular location is the chloroplast. The catalysed reaction is 2 5-aminolevulinate = porphobilinogen + 2 H2O + H(+). It functions in the pathway porphyrin-containing compound metabolism; protoporphyrin-IX biosynthesis; coproporphyrinogen-III from 5-aminolevulinate: step 1/4. Functionally, catalyzes an early step in the biosynthesis of tetrapyrroles. Binds two molecules of 5-aminolevulinate per subunit, each at a distinct site, and catalyzes their condensation to form porphobilinogen. This is Delta-aminolevulinic acid dehydratase, chloroplastic (HEMB) from Spinacia oleracea (Spinach).